A 1186-amino-acid polypeptide reads, in one-letter code: Partner and localizer of BRCA2 (1186 aa).

Residues M1–R160 are required for its oligomerization and is important for its focal concentration at DNA damage sites. Residues M1–L200 form an interaction with RAD51 region. An interaction with BRCA1 region spans residues M1–S319. The interval M1–A579 is DNA-binding (with the preference D loop &gt; dsDNA &gt; ssDNA). Residues L9–A41 adopt a coiled-coil conformation. 2 disordered regions span residues V52–P72 and K95–S157. A compositionally biased stretch (basic and acidic residues) spans R120 to Q141. Residues L143–K152 are compositionally biased toward basic residues. Phosphoserine is present on residues S172 and S190. A disordered region spans residues T252–L273. S285 is subject to Phosphoserine. Residues K346–R365 are disordered. Residues S376 and S387 each carry the phosphoserine modification. A chAM (Chromatin-association motif); required for chromatin association, mediates nucleosome association region spans residues S395–D446. The interval F440–D525 is disordered. S454 is subject to Phosphoserine. Polar residues predominate over residues G467 to S488. S660 carries the post-translational modification Phosphoserine. 2 disordered regions span residues P679–L698 and K774–P798. A compositionally biased stretch (polar residues) spans P687–L698. The tract at residues Q775–S1186 is required for interaction with POLH and POLH DNA synthesis stimulation. S781 carries the phosphoserine modification. Positions G853–S1186 are interaction with RAD51, BRCA2 and POLH. WD repeat units lie at residues N854–A915, V917–L961, K962–P1009, E1010–D1052, S1058–C1109, A1115–P1153, and S1155–S1186.

In terms of assembly, homooligomer; dissociated upon DNA damage thus allowing association with BRCA1. Oligomerization is essential for its focal accumulation at DNA breaks. Part of a BRCA complex containing BRCA1, BRCA2 and PALB2. Interacts with BRCA1 and this interaction is essential for its function in HRR. Interacts with RAD51AP1 and MORF4L1/MRG15. Component of the homologous recombination repair (HR) complex composed of ERCC5/XPG, BRCA2, PALB2, DSS1 and RAD51. Within the complex, interacts with ERCC5/XPG and BRCA2. Interacts with BRCA2, RAD51C, RAD51 and XRCC3; the interactions are direct and it may serve as a scaffold for a HR complex containing PALB2, BRCA2, RAD51C, RAD51 and XRCC3. Interacts with POLH; the interaction is direct.

Its subcellular location is the nucleus. Its function is as follows. Plays a critical role in homologous recombination repair (HRR) through its ability to recruit BRCA2 and RAD51 to DNA breaks. Strongly stimulates the DNA strand-invasion activity of RAD51, stabilizes the nucleoprotein filament against a disruptive BRC3-BRC4 polypeptide and helps RAD51 to overcome the suppressive effect of replication protein A (RPA). Functionally cooperates with RAD51AP1 in promoting of D-loop formation by RAD51. Serves as the molecular scaffold in the formation of the BRCA1-PALB2-BRCA2 complex which is essential for homologous recombination. Via its WD repeats is proposed to scaffold a HR complex containing RAD51C and BRCA2 which is thought to play a role in HR-mediated DNA repair. Essential partner of BRCA2 that promotes the localization and stability of BRCA2. Also enables its recombinational repair and checkpoint functions of BRCA2. May act by promoting stable association of BRCA2 with nuclear structures, allowing BRCA2 to escape the effects of proteasome-mediated degradation. Binds DNA with high affinity for D loop, which comprises single-stranded, double-stranded and branched DNA structures. May play a role in the extension step after strand invasion at replication-dependent DNA double-strand breaks; together with BRCA2 is involved in both POLH localization at collapsed replication forks and DNA polymerization activity. The protein is Partner and localizer of BRCA2 (PALB2) of Homo sapiens (Human).